Reading from the N-terminus, the 221-residue chain is Probable septum site-determining protein MinC (221 aa).

Belongs to the MinC family. In terms of assembly, interacts with MinD and FtsZ.

In terms of biological role, cell division inhibitor that blocks the formation of polar Z ring septums. Rapidly oscillates between the poles of the cell to destabilize FtsZ filaments that have formed before they mature into polar Z rings. Prevents FtsZ polymerization. In Shewanella denitrificans (strain OS217 / ATCC BAA-1090 / DSM 15013), this protein is Probable septum site-determining protein MinC.